The sequence spans 664 residues: E3 ubiquitin-protein ligase CHFR (664 aa).

Residues 1–21 form a disordered region; that stretch reads MERPEEGKQSPPPQPWGRLLR. Residues 38-89 enclose the FHA domain; it reads WTIGRRRGCDLSFPSNKLVSGDHCRIVVDEKSGQVTLEDTSTSGTVINKLKV. The disordered stretch occupies residues 142-267; sequence FHGTKDTSGA…KKMRGDGDLD (126 aa). Residues 186–198 are compositionally biased toward low complexity; that stretch reads PTASASSTEPSPA. Serine 244 is subject to Phosphoserine. Residues 254–264 are compositionally biased toward basic and acidic residues; that stretch reads EPVKKKMRGDG. The RING-type zinc-finger motif lies at 304–343; sequence CIICQDLLHDCVSLQPCMHTFCAACYSGWMERSSLCPTCR. Threonine 386 carries the post-translational modification Phosphothreonine. Disordered regions lie at residues 388–417 and 439–461; these read DMLQ…VDSE and AQPP…GDAP. Over residues 400 to 417 the composition is skewed to acidic residues; sequence DEEGSSEDLLELSDVDSE. The PBZ-type zinc-finger motif lies at 633 to 655; the sequence is PDCYWGRNCRTQVKAHHAMKFNH.

Belongs to the CHFR family. Interacts with HDAC1 and HDAC2. Interacts with PML (with sumoylated form of PML). In terms of processing, poly-ADP-ribosylated. In addition to binding non covalently poly(ADP-ribose) via its PBZ-type zinc finger, the protein is also covalently poly-ADP-ribosylated by PARP1. Post-translationally, autoubiquitinated; may regulate its cellular level. Phosphorylated by PKB. Phosphorylation may affect its E3 ligase activity. Ubiquitous.

It localises to the nucleus. It is found in the PML body. It carries out the reaction S-ubiquitinyl-[E2 ubiquitin-conjugating enzyme]-L-cysteine + [acceptor protein]-L-lysine = [E2 ubiquitin-conjugating enzyme]-L-cysteine + N(6)-ubiquitinyl-[acceptor protein]-L-lysine.. The protein operates within protein modification; protein ubiquitination. E3 ubiquitin-protein ligase that functions in the antephase checkpoint by actively delaying passage into mitosis in response to microtubule poisons. Acts in early prophase before chromosome condensation, when the centrosome move apart from each other along the periphery of the nucleus. Probably involved in signaling the presence of mitotic stress caused by microtubule poisons by mediating the 'Lys-48'-linked ubiquitination of target proteins, leading to their degradation by the proteasome. Promotes the ubiquitination and subsequent degradation of AURKA and PLK1. Probably acts as a tumor suppressor, possibly by mediating the polyubiquitination of HDAC1, leading to its degradation. May also promote the formation of 'Lys-63'-linked polyubiquitin chains and functions with the specific ubiquitin-conjugating UBC13-MMS2 (UBE2N-UBE2V2) heterodimer. Substrates that are polyubiquitinated at 'Lys-63' are usually not targeted for degradation, but are rather involved in signaling cellular stress. The sequence is that of E3 ubiquitin-protein ligase CHFR (CHFR) from Homo sapiens (Human).